A 373-amino-acid chain; its full sequence is Queuine tRNA-ribosyltransferase accessory subunit 2 (373 aa).

Positions 320, 322, 325, and 351 each coordinate Zn(2+).

It belongs to the queuine tRNA-ribosyltransferase family. QTRT2 subfamily. In terms of assembly, heterodimer of a catalytic subunit and an accessory subunit. Zn(2+) is required as a cofactor.

The protein resides in the cytoplasm. In terms of biological role, non-catalytic subunit of the queuine tRNA-ribosyltransferase (TGT) that catalyzes the base-exchange of a guanine (G) residue with queuine (Q) at position 34 (anticodon wobble position) in tRNAs with GU(N) anticodons (tRNA-Asp, -Asn, -His and -Tyr), resulting in the hypermodified nucleoside queuosine (7-(((4,5-cis-dihydroxy-2-cyclopenten-1-yl)amino)methyl)-7-deazaguanosine). The polypeptide is Queuine tRNA-ribosyltransferase accessory subunit 2 (Caenorhabditis elegans).